We begin with the raw amino-acid sequence, 281 residues long: NADPH-dependent 7-cyano-7-deazaguanine reductase (281 aa).

88 to 90 (VES) is a binding site for substrate. Residue 90 to 91 (SK) participates in NADPH binding. Residue Cys189 is the Thioimide intermediate of the active site. The Proton donor role is filled by Asp196. A substrate-binding site is contributed by 228 to 229 (HE). 257 to 258 (RG) contacts NADPH.

It belongs to the GTP cyclohydrolase I family. QueF type 2 subfamily. In terms of assembly, homodimer.

The protein localises to the cytoplasm. It catalyses the reaction 7-aminomethyl-7-carbaguanine + 2 NADP(+) = 7-cyano-7-deazaguanine + 2 NADPH + 3 H(+). It functions in the pathway tRNA modification; tRNA-queuosine biosynthesis. In terms of biological role, catalyzes the NADPH-dependent reduction of 7-cyano-7-deazaguanine (preQ0) to 7-aminomethyl-7-deazaguanine (preQ1). The sequence is that of NADPH-dependent 7-cyano-7-deazaguanine reductase from Klebsiella pneumoniae subsp. pneumoniae (strain ATCC 700721 / MGH 78578).